The following is a 434-amino-acid chain: Neuropeptide receptor 22 (434 aa).

Residues 1-55 (MDEGGGIGSSLLSRITTTASEIMMRNEPTTTENPAVQEMNHIYHLTPSMKMLCIL) are Extracellular-facing. A helical membrane pass occupies residues 56–76 (FYSILCVCCVYGNVLVILVIV). Over 77 to 86 (YFKRLRTATN) the chain is Cytoplasmic. A helical transmembrane segment spans residues 87-107 (ILILNLAVADLLISVFCIPFS). Residues 108-128 (YWQVLIYDDQRWLFGSMMCSL) lie on the Extracellular side of the membrane. A disulfide bond links C126 and C204. A helical transmembrane segment spans residues 129–149 (LAFLQAMAVFLSAWTLVVISF). Topologically, residues 150-169 (DRWMAIMFLLTPNIRITRRR) are cytoplasmic. A helical transmembrane segment spans residues 170-190 (ALYLVAATWIFSILMALPLLF). Over 191-226 (TTRFFEDQDGLPNCGENWTYFGDSGEQVRKVYSSMV) the chain is Extracellular. N207 is a glycosylation site (N-linked (GlcNAc...) asparagine). A helical membrane pass occupies residues 227–247 (LILQYVVPQAVLIITYTHIGI). The Cytoplasmic portion of the chain corresponds to 248 to 277 (KMWNSRVPGMQNGATKKMIVDRHESVKKLV). The helical transmembrane segment at 278-298 (PMVILISALFALCWLPLLILI) threads the bilayer. Residues 299-310 (NVIPEFYPDINS) lie on the Extracellular side of the membrane. Residues 311 to 331 (WGYILYLWWFAHGLAMSHSMV) form a helical membrane-spanning segment. Over 332 to 434 (NPIIYFIRNA…VRNNSANSLA (103 aa)) the chain is Cytoplasmic.

It belongs to the G-protein coupled receptor 1 family. In terms of tissue distribution, expressed in many cells, mainly in the head region, with expression detected in the head muscles, I2 neurons, MC neurons, RIH neuron, AIA neurons, AUA neurons, ASK neurons, ASI neurons, a few B-type motorneurons in the posterior ventral nerve cord, pharyngeal muscles, body wall muscles, the intestine and a few classes of unidentified cells anterior to the nerve ring. Expression in the MC neurons is important to mediate suppression of feeding while expression in the RIH neuron is important for the facilitation of egg-laying. No expression detected in other tissues including hypodermis.

Its subcellular location is the cell membrane. Its function is as follows. Receptor for the LURY-1-1 and LURY-1-2 peptides which control food-related processes including feeding, lifespan, egg-laying and roaming behavior. Receptor for flp-7 which stimulates serotonin-induced fat loss. Serotonin induces secretion of flp-7 from neurons and binding to npr-22 which leads to induction of the atgp-1 lipase and subsequent fat loss. Acts in vitro as a receptor for the flp-7 FMRFamide-like neuropeptides TPMQRSSMVRF-amide, SPMQRSSMVRF-amide, SPMERSAMVRF-amide and SPMDRSKMVRF-amide. Also acts in vitro as a receptor for a number of other FMRFamide-like neuropeptides including the flp-1 neuropeptide PNFMRY-amide, the flp-9 neuropeptide KPSFVRF-amide, the flp-11 neuropeptides AMRNALVRF-amide, ASGGMRNALVRF-amide and NGAPQPFVRF-amide, the flp-13 neuropeptides AADGAPLIRF-amide, ASPSAPLIRF-amide, SPSAVPLIRF-amide, SAAAPLIRF-amide and ASSAPLIRF-amide, and the flp-22 neuropeptide SPSAKWMRF-amide. The SPMERSAMVRF-amide neuropeptide from flp-7 acts as the strongest in vitro activator of npr-22. The sequence is that of Neuropeptide receptor 22 from Caenorhabditis elegans.